We begin with the raw amino-acid sequence, 125 residues long: Small ribosomal subunit protein bS6 (125 aa).

It belongs to the bacterial ribosomal protein bS6 family.

Functionally, binds together with bS18 to 16S ribosomal RNA. This chain is Small ribosomal subunit protein bS6 (rpsF), found in Campylobacter jejuni subsp. jejuni serotype O:2 (strain ATCC 700819 / NCTC 11168).